The following is a 127-amino-acid chain: Glycine cleavage system H protein (127 aa).

The Lipoyl-binding domain maps to 22 to 104 (EAVIGITHFA…YTEGWMLRVK (83 aa)). An N6-lipoyllysine modification is found at lysine 63.

Belongs to the GcvH family. The glycine cleavage system is composed of four proteins: P, T, L and H. The cofactor is (R)-lipoate.

In terms of biological role, the glycine cleavage system catalyzes the degradation of glycine. The H protein shuttles the methylamine group of glycine from the P protein to the T protein. The sequence is that of Glycine cleavage system H protein from Nitratidesulfovibrio vulgaris (strain DP4) (Desulfovibrio vulgaris).